A 104-amino-acid chain; its full sequence is NADH-quinone oxidoreductase subunit K (104 aa).

3 consecutive transmembrane segments (helical) span residues 4 to 24, 31 to 51, and 64 to 84; these read VPLSVYLVLALILFCIGLYGA, VIVLICIELMLNAVNINLVAF, and IFALFTITVAAAEAAVGLAIL.

This sequence belongs to the complex I subunit 4L family. As to quaternary structure, NDH-1 is composed of 14 different subunits. Subunits NuoA, H, J, K, L, M, N constitute the membrane sector of the complex.

The protein resides in the cell membrane. It catalyses the reaction a quinone + NADH + 5 H(+)(in) = a quinol + NAD(+) + 4 H(+)(out). Its function is as follows. NDH-1 shuttles electrons from NADH, via FMN and iron-sulfur (Fe-S) centers, to quinones in the respiratory chain. The immediate electron acceptor for the enzyme in this species is believed to be a menaquinone. Couples the redox reaction to proton translocation (for every two electrons transferred, four hydrogen ions are translocated across the cytoplasmic membrane), and thus conserves the redox energy in a proton gradient. This is NADH-quinone oxidoreductase subunit K from Geobacillus sp. (strain WCH70).